The following is a 270-amino-acid chain: Phosphatidate cytidylyltransferase (270 aa).

Helical transmembrane passes span 19–39 (LWLT…IGLA), 53–73 (TAFS…LLIL), 76–96 (GALL…VTQW), 101–121 (GWPA…SLLR), 126–146 (FGFT…ITAY), 183–203 (LVAS…ALLL), and 248–268 (ALLY…AIFF).

The protein belongs to the CDS family.

It is found in the cell inner membrane. It catalyses the reaction a 1,2-diacyl-sn-glycero-3-phosphate + CTP + H(+) = a CDP-1,2-diacyl-sn-glycerol + diphosphate. The protein operates within phospholipid metabolism; CDP-diacylglycerol biosynthesis; CDP-diacylglycerol from sn-glycerol 3-phosphate: step 3/3. This is Phosphatidate cytidylyltransferase (cdsA) from Brucella abortus (strain 2308).